The primary structure comprises 231 residues: Translin-associated protein X homolog (231 aa).

Belongs to the translin family.

The protein localises to the cytoplasm. Its subcellular location is the nucleus. The sequence is that of Translin-associated protein X homolog from Schizosaccharomyces pombe (strain 972 / ATCC 24843) (Fission yeast).